Reading from the N-terminus, the 102-residue chain is Vesicle-associated membrane protein 5 (102 aa).

The Cytoplasmic portion of the chain corresponds to 1–72 (MAGKELERCQ…RWENIRCRVY (72 aa)). The v-SNARE coiled-coil homology domain maps to 5-65 (ELERCQRQAD…KTLAQQKRWE (61 aa)). 3 positions are modified to phosphoserine: S41, S48, and S49. The chain crosses the membrane as a helical; Anchor for type IV membrane protein span at residues 73-93 (LGLAVAGGLLLILVVLLVIFL). The Vesicular portion of the chain corresponds to 94-102 (PSGEDSSKP).

It belongs to the synaptobrevin family.

The protein resides in the cell membrane. It is found in the endomembrane system. It localises to the golgi apparatus. The protein localises to the trans-Golgi network membrane. In terms of biological role, may participate in trafficking events that are associated with myogenesis, such as myoblast fusion and/or GLUT4 trafficking. This chain is Vesicle-associated membrane protein 5 (Vamp5), found in Rattus norvegicus (Rat).